Here is a 494-residue protein sequence, read N- to C-terminus: Alpha-amylase-related protein (494 aa).

The signal sequence occupies residues methionine 1 to alanine 20. Position 21 is a pyrrolidone carboxylic acid (glutamine 21). Cysteine 48 and cysteine 104 form a disulfide bridge. Residues asparagine 118, glutamine 169, and aspartate 178 each contribute to the Ca(2+) site. Cysteine 157 and cysteine 171 are joined by a disulfide. Arginine 206 is a binding site for chloride. The Nucleophile role is filled by aspartate 208. Histidine 212 lines the Ca(2+) pocket. The active-site Proton donor is glutamate 245. Chloride is bound by residues asparagine 308 and arginine 343. 3 disulfides stabilise this stretch: cysteine 376–cysteine 382, cysteine 418–cysteine 441, and cysteine 448–cysteine 460.

It belongs to the glycosyl hydrolase 13 family. As to quaternary structure, monomer. The cofactor is Ca(2+). It depends on chloride as a cofactor.

It localises to the secreted. It catalyses the reaction Endohydrolysis of (1-&gt;4)-alpha-D-glucosidic linkages in polysaccharides containing three or more (1-&gt;4)-alpha-linked D-glucose units.. This chain is Alpha-amylase-related protein (Amyrel), found in Drosophila ercepeae (Fruit fly).